The primary structure comprises 227 residues: Ribose-5-phosphate isomerase A (227 aa).

Substrate contacts are provided by residues 28–31 (TGST), 81–84 (DGAD), and 94–97 (KGGG). The Proton acceptor role is filled by Glu-103. Lys-121 provides a ligand contact to substrate.

This sequence belongs to the ribose 5-phosphate isomerase family. Homodimer.

It carries out the reaction aldehydo-D-ribose 5-phosphate = D-ribulose 5-phosphate. Its pathway is carbohydrate degradation; pentose phosphate pathway; D-ribose 5-phosphate from D-ribulose 5-phosphate (non-oxidative stage): step 1/1. Functionally, catalyzes the reversible conversion of ribose-5-phosphate to ribulose 5-phosphate. This Caulobacter vibrioides (strain ATCC 19089 / CIP 103742 / CB 15) (Caulobacter crescentus) protein is Ribose-5-phosphate isomerase A.